The chain runs to 81 residues: Short neurotoxin D (81 aa).

The N-terminal stretch at 1–21 (MKTLLLTLVVVTIVCLDLGYT) is a signal peptide. Disulfide bonds link C24/C43, C38/C60, C62/C73, and C74/C79.

The protein belongs to the three-finger toxin family. Short-chain subfamily. Type I alpha-neurotoxin sub-subfamily. Expressed by the venom gland.

Its subcellular location is the secreted. Binds to muscle nicotinic acetylcholine receptor (nAChR) and inhibit acetylcholine from binding to the receptor, thereby impairing neuromuscular transmission. This Aipysurus laevis (Olive sea snake) protein is Short neurotoxin D.